Reading from the N-terminus, the 231-residue chain is Phosphatidylserine decarboxylase proenzyme (231 aa).

Ser189 (schiff-base intermediate with substrate; via pyruvic acid) is an active-site residue. Ser189 bears the Pyruvic acid (Ser); by autocatalysis mark.

The protein belongs to the phosphatidylserine decarboxylase family. PSD-A subfamily. In terms of assembly, heterodimer of a large membrane-associated beta subunit and a small pyruvoyl-containing alpha subunit. Pyruvate serves as cofactor. Is synthesized initially as an inactive proenzyme. Formation of the active enzyme involves a self-maturation process in which the active site pyruvoyl group is generated from an internal serine residue via an autocatalytic post-translational modification. Two non-identical subunits are generated from the proenzyme in this reaction, and the pyruvate is formed at the N-terminus of the alpha chain, which is derived from the carboxyl end of the proenzyme. The post-translation cleavage follows an unusual pathway, termed non-hydrolytic serinolysis, in which the side chain hydroxyl group of the serine supplies its oxygen atom to form the C-terminus of the beta chain, while the remainder of the serine residue undergoes an oxidative deamination to produce ammonia and the pyruvoyl prosthetic group on the alpha chain.

It localises to the cell membrane. The enzyme catalyses a 1,2-diacyl-sn-glycero-3-phospho-L-serine + H(+) = a 1,2-diacyl-sn-glycero-3-phosphoethanolamine + CO2. Its pathway is phospholipid metabolism; phosphatidylethanolamine biosynthesis; phosphatidylethanolamine from CDP-diacylglycerol: step 2/2. In terms of biological role, catalyzes the formation of phosphatidylethanolamine (PtdEtn) from phosphatidylserine (PtdSer). The chain is Phosphatidylserine decarboxylase proenzyme from Chelativorans sp. (strain BNC1).